Consider the following 815-residue polypeptide: Ent-sandaracopimara-8(14),15-diene synthase, chloroplastic (815 aa).

The N-terminal 38 residues, 1–38 (MLPSSICSMGQIPRTSPHYYGMLPKQMSKGHPPMVTRA), are a transit peptide targeting the chloroplast. 5 residues coordinate Mg(2+): D550, D554, N696, T700, and E704. The DDXXD motif signature appears at 550-554 (DDFFD).

It belongs to the terpene synthase family. Mg(2+) is required as a cofactor.

It is found in the plastid. The protein localises to the chloroplast. The catalysed reaction is ent-copalyl diphosphate = ent-sandaracopimara-8(14),15-diene + diphosphate. It carries out the reaction 9alpha-copalyl diphosphate = (12E)-9alpha-labda-8(17),12,14-triene + diphosphate. Its function is as follows. Involved in the biosynthesis of oryzalexin A-F phytoalexins. Catalyzes the conversion of ent-copalyl diphosphate to the phytoalexin precursor ent-sandaracopimaradiene. This Oryza sativa subsp. japonica (Rice) protein is Ent-sandaracopimara-8(14),15-diene synthase, chloroplastic.